Reading from the N-terminus, the 503-residue chain is UDP-N-acetylmuramoylalanine--D-glutamate ligase (503 aa).

Residue 129 to 135 (GTNGKTT) participates in ATP binding.

Belongs to the MurCDEF family.

It localises to the cytoplasm. The enzyme catalyses UDP-N-acetyl-alpha-D-muramoyl-L-alanine + D-glutamate + ATP = UDP-N-acetyl-alpha-D-muramoyl-L-alanyl-D-glutamate + ADP + phosphate + H(+). Its pathway is cell wall biogenesis; peptidoglycan biosynthesis. Cell wall formation. Catalyzes the addition of glutamate to the nucleotide precursor UDP-N-acetylmuramoyl-L-alanine (UMA). The polypeptide is UDP-N-acetylmuramoylalanine--D-glutamate ligase (Burkholderia vietnamiensis (strain G4 / LMG 22486) (Burkholderia cepacia (strain R1808))).